The primary structure comprises 176 residues: Peptidyl-prolyl cis-trans isomerase cyp6 (176 aa).

The region spanning 10 to 173 (FFDIAVNGQH…AKIEITDCGE (164 aa)) is the PPIase cyclophilin-type domain.

It belongs to the cyclophilin-type PPIase family.

The catalysed reaction is [protein]-peptidylproline (omega=180) = [protein]-peptidylproline (omega=0). PPIases accelerate the folding of proteins. It catalyzes the cis-trans isomerization of proline imidic peptide bonds in oligopeptides. The protein is Peptidyl-prolyl cis-trans isomerase cyp6 (cyp6) of Rhizopus delemar (strain RA 99-880 / ATCC MYA-4621 / FGSC 9543 / NRRL 43880) (Mucormycosis agent).